The following is a 631-amino-acid chain: Nucleoside triphosphatase I (631 aa).

The region spanning 42–204 is the Helicase ATP-binding domain; sequence FLGLDSMHSL…TMLVNLLRPG (163 aa). 55-62 contributes to the ATP binding site; sequence HETGVGKT. A DEXH box motif is present at residues 141-144; the sequence is DECH. The Helicase C-terminal domain occupies 367–532; sequence KFIDVCLGIL…EFVQLFRVFK (166 aa).

The protein belongs to the helicase family. NPH I subfamily. Monomer.

It carries out the reaction a ribonucleoside 5'-triphosphate + H2O = a ribonucleoside 5'-diphosphate + phosphate + H(+). Its function is as follows. Serves two roles in transcription; it acts in concert with viral termination factor/capping enzyme to catalyze release of UUUUUNU-containing nascent RNA from the elongation complex, and it acts by itself as a polymerase elongation factor to facilitate readthrough of intrinsic pause sites. The chain is Nucleoside triphosphatase I (NPH1) from Homo sapiens (Human).